Consider the following 308-residue polypeptide: Leucine-rich repeat-containing protein 59 (308 aa).

Over 1–248 the chain is Cytoplasmic; sequence MARANGRSQN…LARRQSRLRK (248 aa). LRR repeat units follow at residues 10–31, 40–61, 63–84, 86–107, and 109–128; these read NLRD…SEVP, KATA…FCNL, YIVR…FGRL, NLQH…FAQL, and SLKW…AKVA. Positions 154–223 form a coiled coil; sequence DHERELQRKL…NNNKKKAEEE (70 aa). 3 stretches are compositionally biased toward basic and acidic residues: residues 170–187, 194–203, and 218–237; these read KQRL…DREL, QQKERKRRDY, and KKAE…PKEK. Positions 170-240 are disordered; the sequence is KQRLEAQQRV…VPTPKEKKLA (71 aa). The chain crosses the membrane as a helical span at residues 249 to 269; the sequence is IACILLFGLMVALLGVVACRF. Topologically, residues 270–308 are lumenal; the sequence is TDLKTFEVCRSVNAVYKETLSALHSNPVLERFLQDPSSQ.

Interacts with SGO1.

The protein resides in the microsome membrane. It localises to the endoplasmic reticulum membrane. It is found in the nucleus envelope. In terms of biological role, required for nuclear import of FGF1. The chain is Leucine-rich repeat-containing protein 59 (lrrc59) from Xenopus tropicalis (Western clawed frog).